A 350-amino-acid chain; its full sequence is Serpentine receptor class beta-12 (350 aa).

Over 1–21 the chain is Extracellular; sequence MSEANLTECELAYQLTYHPFY. N-linked (GlcNAc...) asparagine glycosylation occurs at N5. Residues 22–42 form a helical membrane-spanning segment; it reads MIAQFWSFFVSLLAMPSLIFF. The Cytoplasmic portion of the chain corresponds to 43–57; sequence MVEKVFKLPFHGNLK. Residues 58-78 form a helical membrane-spanning segment; that stretch reads FLLVSYFIGTFLFASIICFTF. The Extracellular portion of the chain corresponds to 79-103; the sequence is GYHFFVPFFVTSNCDLIINATLFKY. N97 carries N-linked (GlcNAc...) asparagine glycosylation. Residues 104–124 form a helical membrane-spanning segment; sequence GHMIALIFMTIPMILPTAFTV. Residues 125 to 141 lie on the Cytoplasmic side of the membrane; it reads ERFVALKMAHSYEHVRT. A helical membrane pass occupies residues 142-162; sequence LLGPVLVLVVIAIDSMFLYDI. Residues 163–189 lie on the Extracellular side of the membrane; the sequence is YGQEKFDKPFINFILVPATSALQFNSF. A helical membrane pass occupies residues 190 to 210; it reads LWYMLYLKITNFICNLILLFI. The Cytoplasmic portion of the chain corresponds to 211 to 243; the sequence is HKILHQSSRYRRKNVSLSVKYEMQEISQSSRFT. A helical transmembrane segment spans residues 244 to 264; that stretch reads LIVTFTHLLFFGWYVSTILLI. At 265–282 the chain is on the extracellular side; the sequence is RTVGPDFFRGFINYTVMR. N277 is a glycosylation site (N-linked (GlcNAc...) asparagine). A helical membrane pass occupies residues 283 to 303; the sequence is GVYCATPTYNLVIVFIGFKAL. Topologically, residues 304-350 are cytoplasmic; the sequence is NHLNFKRNNKVQSTIQIKSTGQEGAENYDNAISNYWDSVYTMNKSKL.

This sequence belongs to the nematode receptor-like protein srb family. In terms of tissue distribution, expressed throughout the head.

The protein resides in the cell membrane. Its subcellular location is the perikaryon. It is found in the cell projection. The protein localises to the dendrite. In terms of biological role, G-protein coupled receptor. Plays a role in the navigational capacity of sperm and promotes the targeting of sperm derived from males to the fertilization site in the uterus of hermaphrodites. The protein is Serpentine receptor class beta-12 of Caenorhabditis elegans.